The chain runs to 80 residues: Cytochrome c oxidase subunit 7A1, mitochondrial (80 aa).

The transit peptide at 1-21 directs the protein to the mitochondrion; it reads MRALRVSQALVRSFSSSTRSH. Topologically, residues 22 to 46 are mitochondrial matrix; it reads LENRVAEKQKLFQADNDLPVHLKGG. A helical transmembrane segment spans residues 47-75; sequence GMDNVLYRLTMTLTLGGTAYCLYCLGWAS. The Mitochondrial intermembrane segment spans residues 76–80; that stretch reads FPHKK.

This sequence belongs to the cytochrome c oxidase VIIa family. Component of the complex IV (CIV, cytochrome c oxidase), a multisubunit enzyme composed of 14 subunits. The complex is composed of a catalytic core of 3 subunits MT-CO1, MT-CO2 and MT-CO3, encoded in the mitochondrial DNA, and 11 supernumerary subunits COX4I, COX5A, COX5B, COX6A, COX6B, COX6C, COX7A, COX7B, COX7C, COX8 and NDUFA4, which are encoded in the nuclear genome. The complex exists as a monomer or a dimer and forms supercomplexes (SCs) in the inner mitochondrial membrane with NADH-ubiquinone oxidoreductase (complex I, CI) and ubiquinol-cytochrome c oxidoreductase (cytochrome b-c1 complex, complex III, CIII), resulting in different assemblies (supercomplex SCI(1)III(2)IV(1) and megacomplex MCI(2)III(2)IV(2)).

The protein localises to the mitochondrion inner membrane. Its pathway is energy metabolism; oxidative phosphorylation. In terms of biological role, component of the mitochondrial respiratory complex IV (CIV, also named cytochrome c oxidase complex), the last enzyme in the mitochondrial electron transport chain which drives oxidative phosphorylation. The CIV complex is the component of the respiratory chain that catalyzes the reduction of oxygen to water. Acts as an assembly factor that specifically drives the homodimerization of CIV complexes, mediating the formation of mitochondrial respiratory supercomplexes (respirasomes) containing two CIV: supercomplxes with two molecules of CIV show improved activity. Despite being highly expressed in brown adipose tissue, not required for thermogenesis. The protein is Cytochrome c oxidase subunit 7A1, mitochondrial of Mus musculus (Mouse).